Reading from the N-terminus, the 159-residue chain is Probable cyclic pyranopterin monophosphate synthase accessory protein (159 aa).

Aspartate 128 is a catalytic residue.

It belongs to the MoaC family.

It participates in cofactor biosynthesis; molybdopterin biosynthesis. Together with MoaA, is involved in the conversion of 5'-GTP to cyclic pyranopterin monophosphate (cPMP or molybdopterin precursor Z). In Methanothermobacter thermautotrophicus (strain ATCC 29096 / DSM 1053 / JCM 10044 / NBRC 100330 / Delta H) (Methanobacterium thermoautotrophicum), this protein is Probable cyclic pyranopterin monophosphate synthase accessory protein.